The chain runs to 102 residues: Large ribosomal subunit protein bL21 (102 aa).

It belongs to the bacterial ribosomal protein bL21 family. In terms of assembly, part of the 50S ribosomal subunit. Contacts protein L20.

This protein binds to 23S rRNA in the presence of protein L20. This is Large ribosomal subunit protein bL21 from Limosilactobacillus fermentum (strain NBRC 3956 / LMG 18251) (Lactobacillus fermentum).